The chain runs to 328 residues: D-cysteine desulfhydrase (328 aa).

Position 51 is an N6-(pyridoxal phosphate)lysine (Lys51).

The protein belongs to the ACC deaminase/D-cysteine desulfhydrase family. As to quaternary structure, homodimer. The cofactor is pyridoxal 5'-phosphate.

The enzyme catalyses D-cysteine + H2O = hydrogen sulfide + pyruvate + NH4(+) + H(+). Functionally, catalyzes the alpha,beta-elimination reaction of D-cysteine and of several D-cysteine derivatives. It could be a defense mechanism against D-cysteine. In Salmonella choleraesuis (strain SC-B67), this protein is D-cysteine desulfhydrase.